The primary structure comprises 473 residues: Glycosyl hydrolase family 109 protein 2 (473 aa).

The segment at residues methionine 1–alanine 31 is a signal peptide (tat-type signal). NAD(+) is bound by residues glycine 77 to arginine 78, aspartate 99, tryptophan 148 to histidine 151, glutamate 168 to valine 169, and asparagine 197. Substrate is bound by residues tyrosine 226, arginine 244, tyrosine 256–histidine 259, and tyrosine 339. Tyrosine 256 contacts NAD(+).

The protein belongs to the Gfo/Idh/MocA family. Glycosyl hydrolase 109 subfamily. It depends on NAD(+) as a cofactor. Predicted to be exported by the Tat system. The position of the signal peptide cleavage has not been experimentally proven.

In terms of biological role, glycosidase. In Akkermansia muciniphila (strain ATCC BAA-835 / DSM 22959 / JCM 33894 / BCRC 81048 / CCUG 64013 / CIP 107961 / Muc), this protein is Glycosyl hydrolase family 109 protein 2.